The following is a 706-amino-acid chain: Envelope glycoprotein H (706 aa).

The first 18 residues, M1–A18, serve as a signal peptide directing secretion. The Virion surface portion of the chain corresponds to S19–L682. N60 carries N-linked (GlcNAc...) asparagine; by host glycosylation. Intrachain disulfides connect C120–C312 and C278–C335. An interaction with gL region spans residues D165–V229. Residue N435 is glycosylated (N-linked (GlcNAc...) asparagine; by host). Disulfide bonds link C454–C478 and C534–C587. N-linked (GlcNAc...) asparagine; by host glycosylation is found at N549 and N604. C612 and C615 are joined by a disulfide. A glycan (N-linked (GlcNAc...) asparagine; by host) is linked at N664. A helical membrane pass occupies residues A683–M703. Residues F704–L706 lie on the Intravirion side of the membrane.

It belongs to the herpesviridae glycoprotein H family. Interacts with glycoprotein L (gL); this interaction is necessary for the correct processing and cell surface expression of gH. The heterodimer gH/gL seems to interact with gB trimers during fusion. The heterodimer gH/gL interacts with host EPHA2 to facilitate virus internalization and fusion. Interacts with glycoprotein 42/BZLF2. In terms of processing, N-glycosylated, O-glycosylated, and sialylated.

It is found in the virion membrane. The protein localises to the host cell membrane. It localises to the host endosome membrane. The heterodimer glycoprotein H-glycoprotein L is required for the fusion of viral and plasma membranes leading to virus entry into the host cell. Following initial binding to host receptor, membrane fusion is mediated by the fusion machinery composed of gB and the heterodimer gH/gL. May also be involved in the fusion between the virion envelope and the outer nuclear membrane during virion morphogenesis. The heterodimer gH/gL targets also host EPHA2 to promote viral entry. This Homo sapiens (Human) protein is Envelope glycoprotein H.